The following is a 109-amino-acid chain: Small ribosomal subunit protein uS10 (109 aa).

Belongs to the universal ribosomal protein uS10 family. Part of the 30S ribosomal subunit.

Involved in the binding of tRNA to the ribosomes. This Wolbachia pipientis wMel protein is Small ribosomal subunit protein uS10.